The primary structure comprises 375 residues: Tyrosine--tRNA ligase (375 aa).

Positions 37, 168, 172, 175, and 190 each coordinate L-tyrosine. A 'KMSKS' region motif is present at residues 251-255 (KMSKS). Residue lysine 254 participates in ATP binding.

This sequence belongs to the class-I aminoacyl-tRNA synthetase family. TyrS type 4 subfamily. In terms of assembly, homodimer.

It is found in the cytoplasm. It catalyses the reaction tRNA(Tyr) + L-tyrosine + ATP = L-tyrosyl-tRNA(Tyr) + AMP + diphosphate + H(+). In terms of biological role, catalyzes the attachment of tyrosine to tRNA(Tyr) in a two-step reaction: tyrosine is first activated by ATP to form Tyr-AMP and then transferred to the acceptor end of tRNA(Tyr). The sequence is that of Tyrosine--tRNA ligase from Pyrococcus abyssi (strain GE5 / Orsay).